We begin with the raw amino-acid sequence, 124 residues long: Small ribosomal subunit protein uS12 (124 aa).

The disordered stretch occupies residues 1-32 (MPTIQQLVRKGRQDKVSKNKTPALKGSPQRRG). Asp-89 bears the 3-methylthioaspartic acid mark.

The protein belongs to the universal ribosomal protein uS12 family. Part of the 30S ribosomal subunit. Contacts proteins S8 and S17. May interact with IF1 in the 30S initiation complex.

With S4 and S5 plays an important role in translational accuracy. Functionally, interacts with and stabilizes bases of the 16S rRNA that are involved in tRNA selection in the A site and with the mRNA backbone. Located at the interface of the 30S and 50S subunits, it traverses the body of the 30S subunit contacting proteins on the other side and probably holding the rRNA structure together. The combined cluster of proteins S8, S12 and S17 appears to hold together the shoulder and platform of the 30S subunit. The sequence is that of Small ribosomal subunit protein uS12 from Nocardioides sp. (strain ATCC BAA-499 / JS614).